The sequence spans 557 residues: Laccase-11 (557 aa).

Positions 1-23 (MKMGFLFLFCYLLAFLGYSPVDA) are cleaved as a signal peptide. Plastocyanin-like domains follow at residues 31–147 (DVQV…PAPG) and 158–308 (ESNI…YKGV). 3 N-linked (GlcNAc...) asparagine glycosylation sites follow: Asn36, Asn69, and Asn77. Cu cation is bound by residues His81 and His83. Residue Asn115 is glycosylated (N-linked (GlcNAc...) asparagine). Residues His126 and His128 each coordinate Cu cation. Asn240, Asn296, Asn323, Asn371, Asn381, Asn398, Asn416, and Asn440 each carry an N-linked (GlcNAc...) asparagine glycan. Positions 406–541 (DFPDRPPKAF…KMAFVVENGE (136 aa)) constitute a Plastocyanin-like 3 domain. Cu cation is bound by residues His458, His461, His463, His520, Cys521, His522, and His526.

Belongs to the multicopper oxidase family. The cofactor is Cu cation. In terms of tissue distribution, ubiquitous and constitutive.

It localises to the secreted. The protein resides in the extracellular space. It is found in the apoplast. It carries out the reaction 4 hydroquinone + O2 = 4 benzosemiquinone + 2 H2O. Functionally, lignin degradation and detoxification of lignin-derived products. The protein is Laccase-11 (LAC11) of Arabidopsis thaliana (Mouse-ear cress).